A 201-amino-acid polypeptide reads, in one-letter code: Adenylyl-sulfate kinase (201 aa).

ATP is bound at residue 35–42 (GLSGSGKS). Catalysis depends on Ser-109, which acts as the Phosphoserine intermediate.

Belongs to the APS kinase family.

The catalysed reaction is adenosine 5'-phosphosulfate + ATP = 3'-phosphoadenylyl sulfate + ADP + H(+). It functions in the pathway sulfur metabolism; hydrogen sulfide biosynthesis; sulfite from sulfate: step 2/3. In terms of biological role, catalyzes the synthesis of activated sulfate. This Escherichia coli O139:H28 (strain E24377A / ETEC) protein is Adenylyl-sulfate kinase.